The following is a 369-amino-acid chain: Probable dual-specificity RNA methyltransferase RlmN (369 aa).

Catalysis depends on Glu108, which acts as the Proton acceptor. The Radical SAM core domain maps to 114-357 (YPDRATVCIS…CTVRDTRGQE (244 aa)). Cys121 and Cys362 form a disulfide bridge. Residues Cys128, Cys132, and Cys135 each contribute to the [4Fe-4S] cluster site. Residues 183 to 184 (GE), Ser217, 240 to 242 (SLH), and Asn319 each bind S-adenosyl-L-methionine. Cys362 serves as the catalytic S-methylcysteine intermediate.

This sequence belongs to the radical SAM superfamily. RlmN family. The cofactor is [4Fe-4S] cluster.

It is found in the cytoplasm. It catalyses the reaction adenosine(2503) in 23S rRNA + 2 reduced [2Fe-2S]-[ferredoxin] + 2 S-adenosyl-L-methionine = 2-methyladenosine(2503) in 23S rRNA + 5'-deoxyadenosine + L-methionine + 2 oxidized [2Fe-2S]-[ferredoxin] + S-adenosyl-L-homocysteine. The enzyme catalyses adenosine(37) in tRNA + 2 reduced [2Fe-2S]-[ferredoxin] + 2 S-adenosyl-L-methionine = 2-methyladenosine(37) in tRNA + 5'-deoxyadenosine + L-methionine + 2 oxidized [2Fe-2S]-[ferredoxin] + S-adenosyl-L-homocysteine. Specifically methylates position 2 of adenine 2503 in 23S rRNA and position 2 of adenine 37 in tRNAs. This is Probable dual-specificity RNA methyltransferase RlmN from Saccharopolyspora erythraea (strain ATCC 11635 / DSM 40517 / JCM 4748 / NBRC 13426 / NCIMB 8594 / NRRL 2338).